Here is a 465-residue protein sequence, read N- to C-terminus: Citrate synthase-like protein (465 aa).

The interval 13–40 (HISDMVDSTKMNGNQSQDTAGRADTPVS) is disordered. Positions 21–31 (TKMNGNQSQDT) are enriched in polar residues. Active-site residues include His-357 and Asp-413.

Belongs to the citrate synthase family.

It functions in the pathway secondary metabolite biosynthesis. Its function is as follows. Citrate synthase-like protein; part of the gene cluster that mediates the biosynthesis of squalestatin S1 (SQS1, also known as zaragozic acid A), a heavily oxidized fungal polyketide that offers potent cholesterol lowering activity by targeting squalene synthase (SS). SQS1 is composed of a 2,8-dioxobicyclic[3.2.1]octane-3,4,5-tricarboxyclic acid core that is connected to two lipophilic polyketide arms. These initial steps feature the priming of an unusual benzoic acid starter unit onto the highly reducing polyketide synthase pks2, followed by oxaloacetate extension and product release to generate a tricarboxylic acid containing product. The phenylalanine ammonia lyase (PAL) M7 and the acyl-CoA ligase M9 are involved in transforming phenylalanine into benzoyl-CoA. The citrate synthase-like protein R3 is involved in connecting the C-alpha-carbons of the hexaketide chain and oxaloacetate to afford the tricarboxylic acid unit. The potential hydrolytic enzymes, M8 and M10, are in close proximity to pks2 and may participate in product release. On the other side, the tetraketide arm is synthesized by a the squalestatin tetraketide synthase pks1 and enzymatically esterified to the core in the last biosynthetic step, by the acetyltransferase M4. The biosynthesis of the tetraketide must involve 3 rounds of chain extension. After the first and second rounds methyl-transfer occurs, and in all rounds of extension the ketoreductase and dehydratase are active. The enoyl reductase and C-MeT of pks1 are not active in the final round of extension. The acetyltransferase M4 appears to have a broad substrate selectivity for its acyl CoA substrate, allowing the in vitro synthesis of novel squalestatins. The biosynthesis of SQS1 requires several oxidative steps likely performed by oxidoreductases M1, R1 and R2. Finally, in support of the identification of the cluster as being responsible for SQS1 production, the cluster contains a gene encoding a putative squalene synthase (SS) R6, suggesting a likely mechanism for self-resistance. The sequence is that of Citrate synthase-like protein from Phoma sp. (strain ATCC 20986 / MF5453).